Reading from the N-terminus, the 66-residue chain is Large ribosomal subunit protein bL35 (66 aa).

Basic residues predominate over residues 1–16 (MPKQKTHRASAKRFKR). A disordered region spans residues 1–20 (MPKQKTHRASAKRFKRTGSG).

The protein belongs to the bacterial ribosomal protein bL35 family.

The protein is Large ribosomal subunit protein bL35 of Streptococcus uberis (strain ATCC BAA-854 / 0140J).